The following is a 1259-amino-acid chain: uncharacterized protein (1259 aa).

Residues 354-410 form a disordered region; it reads KLNQAGGKRNSSMNNSTQNNNSSRSNNSARNNNSVWNNNNSAWKNNNSAWNDNSSWK. Residues 362-410 are compositionally biased toward low complexity; that stretch reads RNSSMNNSTQNNNSSRSNNSARNNNSVWNNNNSAWKNNNSAWNDNSSWK.

It localises to the virion. This is an uncharacterized protein from Acanthamoeba polyphaga (Amoeba).